The primary structure comprises 304 residues: IHSADPKDPTYNTFAAALNFIGSDNALKLIVAVLAGFIAMSIADRPGFAPGMVGGFMATQANAGFLGGLIAGFLAGYVVILLKKLFVFIPQSLDGLKPVLIYPLLGIFITGVLMQFVINTPVAAFMNFLTNWLESLGTGNLVLMGIILGGMMAIDMGGPLNKAAFTFGIAMIDAGNYAPHAAIMAGGMVPPLGIALATTFFRHKFSKRDREAGITCYFMGAAFVTEGAIPFAAADLRVIPAAVIGSAVAGGLTEFFRVTLPAPHGGVFVAFITNHPLLYLLSIVIGAIVTAVILGIIKKPVEEK.

One can recognise a PTS EIIC type-2 domain in the interval isoleucine 1–lysine 304. The next 8 helical transmembrane spans lie at phenylalanine 20 to methionine 40, asparagine 62 to leucine 82, proline 98 to isoleucine 118, asparagine 140 to leucine 160, alanine 181 to phenylalanine 201, isoleucine 214 to alanine 234, valine 238 to valine 258, and leucine 277 to isoleucine 297.

The protein resides in the cell membrane. Functionally, the phosphoenolpyruvate-dependent sugar phosphotransferase system (PTS), a major carbohydrate active -transport system, catalyzes the phosphorylation of incoming sugar substrates concomitant with their translocation across the cell membrane. This system is involved in fructose transport. The protein is Fructose permease IIC component (fruA) of Bacillus amyloliquefaciens (Bacillus velezensis).